The chain runs to 224 residues: E3 ubiquitin-protein ligase TRIM48 (224 aa).

Residues 31 to 72 (CPICMNYFIDPVTIDCGHSFCRPCFYLNWQDIPILTQCFECI) form an RING-type zinc finger. The segment at 104 to 145 (SEEQMCGIHRETKKMFCEVDRSLLCLLCSSSQEHRYHRHCPA) adopts a B box-type zinc-finger fold. 4 residues coordinate Zn(2+): C109, H112, C131, and H137.

The protein belongs to the TRIM/RBCC family. In terms of assembly, interacts with PRMT1; the interaction leads to ubiquitination of PRMT1 by TRIM48. Interacts with MAP3K5. Interacts with STRAP.

It is found in the cytoplasm. Its subcellular location is the cytosol. It carries out the reaction S-ubiquitinyl-[E2 ubiquitin-conjugating enzyme]-L-cysteine + [acceptor protein]-L-lysine = [E2 ubiquitin-conjugating enzyme]-L-cysteine + N(6)-ubiquitinyl-[acceptor protein]-L-lysine.. Its function is as follows. E3 ubiquitin-protein ligase which promotes K48-linked polyubiquitination of protein methyltransferase PRMT1, leading to PRMT1 degradation. This suppresses methylation of the PRMT1 substrate MAP3K5/ASK1, promoting its activation and increasing MAP3K5-dependent cell death induced by oxidative stress. TRIM48-mediated ubiquitination of PRMT1 also suppresses methylation of FOXO1 by PRMT1, leading to inhibition of FOXO1 transcriptional activity. The polypeptide is E3 ubiquitin-protein ligase TRIM48 (Homo sapiens (Human)).